Consider the following 363-residue polypeptide: NAD(P)H-quinone oxidoreductase subunit 1, chloroplastic (363 aa).

The next 8 membrane-spanning stretches (helical) occupy residues 30-50 (LVPI…IVWL), 98-118 (FSIG…VIPF), 127-147 (LSIG…GLLM), 165-185 (AAQS…ISLL), 203-223 (FWGW…ISSL), 248-268 (YSGI…LVSS), 300-320 (VFGT…FLFI), and 336-356 (LLNL…LLTT).

The protein belongs to the complex I subunit 1 family. NDH is composed of at least 16 different subunits, 5 of which are encoded in the nucleus.

The protein localises to the plastid. Its subcellular location is the chloroplast thylakoid membrane. The enzyme catalyses a plastoquinone + NADH + (n+1) H(+)(in) = a plastoquinol + NAD(+) + n H(+)(out). It carries out the reaction a plastoquinone + NADPH + (n+1) H(+)(in) = a plastoquinol + NADP(+) + n H(+)(out). Functionally, NDH shuttles electrons from NAD(P)H:plastoquinone, via FMN and iron-sulfur (Fe-S) centers, to quinones in the photosynthetic chain and possibly in a chloroplast respiratory chain. The immediate electron acceptor for the enzyme in this species is believed to be plastoquinone. Couples the redox reaction to proton translocation, and thus conserves the redox energy in a proton gradient. In Solanum bulbocastanum (Wild potato), this protein is NAD(P)H-quinone oxidoreductase subunit 1, chloroplastic.